A 343-amino-acid polypeptide reads, in one-letter code: Heat-inducible transcription repressor HrcA (343 aa).

This sequence belongs to the HrcA family.

Negative regulator of class I heat shock genes (grpE-dnaK-dnaJ and groELS operons). Prevents heat-shock induction of these operons. The polypeptide is Heat-inducible transcription repressor HrcA (Mycoplasma genitalium (strain ATCC 33530 / DSM 19775 / NCTC 10195 / G37) (Mycoplasmoides genitalium)).